Consider the following 122-residue polypeptide: Small ribosomal subunit protein uS13 (122 aa).

Residues R99–K122 form a disordered region.

The protein belongs to the universal ribosomal protein uS13 family. Part of the 30S ribosomal subunit. Forms a loose heterodimer with protein S19. Forms two bridges to the 50S subunit in the 70S ribosome.

Functionally, located at the top of the head of the 30S subunit, it contacts several helices of the 16S rRNA. In the 70S ribosome it contacts the 23S rRNA (bridge B1a) and protein L5 of the 50S subunit (bridge B1b), connecting the 2 subunits; these bridges are implicated in subunit movement. Contacts the tRNAs in the A and P-sites. The chain is Small ribosomal subunit protein uS13 from Rhizobium leguminosarum bv. trifolii (strain WSM2304).